Reading from the N-terminus, the 317-residue chain is Curved DNA-binding protein (317 aa).

A J domain is found at 5 to 69 (DYYKILGVEP…QKRAEFDEIR (65 aa)).

It localises to the cytoplasm. The protein localises to the nucleoid. Functionally, DNA-binding protein that preferentially recognizes a curved DNA sequence. It is probably a functional analog of DnaJ; displays overlapping activities with DnaJ, but functions under different conditions, probably acting as a molecular chaperone in an adaptive response to environmental stresses other than heat shock. Lacks autonomous chaperone activity; binds native substrates and targets them for recognition by DnaK. Its activity is inhibited by the binding of CbpM. The polypeptide is Curved DNA-binding protein (Pseudomonas putida (strain W619)).